The sequence spans 390 residues: Argininosuccinate synthase (390 aa).

6–14 (SYSGGLDTT) serves as a coordination point for ATP. Tyrosine 83 serves as a coordination point for L-citrulline. Glycine 113 serves as a coordination point for ATP. The L-aspartate site is built by threonine 115, asparagine 119, and aspartate 120. L-citrulline is bound at residue asparagine 119. Positions 123, 169, 178, 254, and 266 each coordinate L-citrulline.

Belongs to the argininosuccinate synthase family. Type 1 subfamily. As to quaternary structure, homotetramer.

The protein resides in the cytoplasm. The enzyme catalyses L-citrulline + L-aspartate + ATP = 2-(N(omega)-L-arginino)succinate + AMP + diphosphate + H(+). Its pathway is amino-acid biosynthesis; L-arginine biosynthesis; L-arginine from L-ornithine and carbamoyl phosphate: step 2/3. This is Argininosuccinate synthase from Archaeoglobus fulgidus (strain ATCC 49558 / DSM 4304 / JCM 9628 / NBRC 100126 / VC-16).